We begin with the raw amino-acid sequence, 687 residues long: Auxin response factor 14 (687 aa).

Positions 133-235 form a DNA-binding region, TF-B3; sequence FCKTLTASDT…QLRLGVRRAV (103 aa).

It belongs to the ARF family. As to quaternary structure, homo and heterodimers. As to expression, expressed in roots, culms, leaves and young panicles.

It localises to the nucleus. In terms of biological role, auxin response factors (ARFs) are transcriptional factors that bind specifically to the DNA sequence 5'-TGTCTC-3' found in the auxin-responsive promoter elements (AuxREs). The polypeptide is Auxin response factor 14 (ARF14) (Oryza sativa subsp. japonica (Rice)).